The sequence spans 324 residues: uncharacterized protein (324 aa).

The next 8 membrane-spanning stretches (helical) occupy residues 5 to 24, 39 to 61, 68 to 90, 95 to 117, 130 to 152, 162 to 179, 199 to 218, and 228 to 250; these read VIGI…NRAM, FIFM…PLLL, FYWI…FAAA, WLIA…LFYV, QKIP…LIQL, MLLF…AYPL, LGMT…YGWW, and TVQS…FWAT.

Its subcellular location is the cell membrane. This is an uncharacterized protein from Bacillus subtilis (strain 168).